A 138-amino-acid chain; its full sequence is ATP synthase epsilon chain (138 aa).

The protein belongs to the ATPase epsilon chain family. In terms of assembly, F-type ATPases have 2 components, CF(1) - the catalytic core - and CF(0) - the membrane proton channel. CF(1) has five subunits: alpha(3), beta(3), gamma(1), delta(1), epsilon(1). CF(0) has three main subunits: a, b and c.

The protein localises to the cell membrane. In terms of biological role, produces ATP from ADP in the presence of a proton gradient across the membrane. The chain is ATP synthase epsilon chain (atpC) from Streptococcus mutans serotype c (strain ATCC 700610 / UA159).